Reading from the N-terminus, the 145-residue chain is Lysozyme-like protein 4 (145 aa).

Positions 1–19 are cleaved as a signal peptide; the sequence is MKASVVLSLIGYLVVPSDT. Residues 20–145 enclose the C-type lysozyme domain; it reads AVLGRCVVAK…LARWLDGCKL (126 aa). 4 disulfide bridges follow: C25–C143, C49–C130, C84–C95, and C91–C109. Residue E54 is part of the active site.

The protein belongs to the glycosyl hydrolase 22 family. Monomer.

The protein localises to the secreted. It is found in the cytoplasmic vesicle. The protein resides in the secretory vesicle. Its subcellular location is the acrosome. It localises to the cell projection. The protein localises to the cilium. It is found in the flagellum. In terms of biological role, may be involved in fertilization. Has no detectable bacteriolytic and lysozyme activities in vitro. The polypeptide is Lysozyme-like protein 4 (LYZL4) (Bos taurus (Bovine)).